Consider the following 147-residue polypeptide: Acidic phospholipase A2 beta-bungarotoxin A4 chain (147 aa).

An N-terminal signal peptide occupies residues 1-19 (MNPAHLLVLSAVCVSLLGA). The propeptide occupies 20–27 (ANIPPQHL). Disulfide bonds link cysteine 54/cysteine 146, cysteine 56/cysteine 72, cysteine 71/cysteine 127, cysteine 78/cysteine 120, cysteine 88/cysteine 113, and cysteine 106/cysteine 118. Ca(2+) contacts are provided by tyrosine 55, glycine 57, and glycine 59. Histidine 75 is a catalytic residue. Aspartate 76 is a Ca(2+) binding site. Residue aspartate 121 is part of the active site.

It belongs to the phospholipase A2 family. Group I subfamily. D49 sub-subfamily. In terms of assembly, heterodimer; disulfide-linked. The A chains have phospholipase A2 activity and the B chains show homology with the basic protease inhibitors. Ca(2+) is required as a cofactor. In terms of tissue distribution, expressed by the venom gland.

Its subcellular location is the secreted. The catalysed reaction is a 1,2-diacyl-sn-glycero-3-phosphocholine + H2O = a 1-acyl-sn-glycero-3-phosphocholine + a fatty acid + H(+). Its function is as follows. Snake venom phospholipase A2 (PLA2) that inhibits neuromuscular transmission by blocking acetylcholine release from the nerve termini. PLA2 catalyzes the calcium-dependent hydrolysis of the 2-acyl groups in 3-sn-phosphoglycerides. This is Acidic phospholipase A2 beta-bungarotoxin A4 chain from Bungarus multicinctus (Many-banded krait).